Consider the following 364-residue polypeptide: Putative agmatine deiminase (364 aa).

The Amidino-cysteine intermediate role is filled by Cys355.

The protein belongs to the agmatine deiminase family.

The catalysed reaction is agmatine + H2O = N-carbamoylputrescine + NH4(+). The protein is Putative agmatine deiminase of Mycoplasma mycoides subsp. mycoides SC (strain CCUG 32753 / NCTC 10114 / PG1).